The chain runs to 310 residues: tRNA dimethylallyltransferase (310 aa).

ATP is bound at residue 14–21 (GPTASGKS). A substrate-binding site is contributed by 16 to 21 (TASGKS). Interaction with substrate tRNA regions lie at residues 39-42 (DSMQ) and 163-167 (QRIVR).

Belongs to the IPP transferase family. Monomer. Requires Mg(2+) as cofactor.

It catalyses the reaction adenosine(37) in tRNA + dimethylallyl diphosphate = N(6)-dimethylallyladenosine(37) in tRNA + diphosphate. In terms of biological role, catalyzes the transfer of a dimethylallyl group onto the adenine at position 37 in tRNAs that read codons beginning with uridine, leading to the formation of N6-(dimethylallyl)adenosine (i(6)A). The polypeptide is tRNA dimethylallyltransferase (Brucella ovis (strain ATCC 25840 / 63/290 / NCTC 10512)).